The following is a 175-amino-acid chain: NADH-quinone oxidoreductase subunit I (175 aa).

4Fe-4S ferredoxin-type domains lie at 69-98 and 115-144; these read KRDEQGRERCTSCFCCMWICPADAIYIEAG and KKFEIDLLRCIFCGMCEEACPKGAIYLDGP. C78, C81, C84, C88, C124, C127, C130, and C134 together coordinate [4Fe-4S] cluster.

It belongs to the complex I 23 kDa subunit family. NDH-1 is composed of 14 different subunits. Subunits NuoA, H, J, K, L, M, N constitute the membrane sector of the complex. It depends on [4Fe-4S] cluster as a cofactor.

The protein resides in the cell inner membrane. It catalyses the reaction a quinone + NADH + 5 H(+)(in) = a quinol + NAD(+) + 4 H(+)(out). NDH-1 shuttles electrons from NADH, via FMN and iron-sulfur (Fe-S) centers, to quinones in the respiratory chain. The immediate electron acceptor for the enzyme in this species is believed to be ubiquinone. Couples the redox reaction to proton translocation (for every two electrons transferred, four hydrogen ions are translocated across the cytoplasmic membrane), and thus conserves the redox energy in a proton gradient. This chain is NADH-quinone oxidoreductase subunit I, found in Leptospira borgpetersenii serovar Hardjo-bovis (strain JB197).